We begin with the raw amino-acid sequence, 289 residues long: MYB transcription factor 69 (289 aa).

HTH myb-type domains lie at 9–61 and 62–116; these read KAGV…TNYL and RPGI…KKKL. 2 DNA-binding regions (H-T-H motif) span residues 37–61 and 89–112; these read WRAVPVSTGLMRCSKSCRLRWTNYL and WAAIASYLPQRTDNDIKNYWNTHL. 2 disordered regions span residues 127–162 and 225–252; these read APPRPSEPTAGHADCRRHDMTRSSKDSHAACPADST and SSAIDIDPFDHKSGGAALPPPKKRQQQQ. Residues 139 to 154 show a composition bias toward basic and acidic residues; sequence ADCRRHDMTRSSKDSH.

In terms of tissue distribution, mainly expressed in highly lignified tissues such as vascular tissues.

The protein localises to the nucleus. Functionally, transcription factor that binds to the promoter of MYB31 and MYB42 and activates directly their expression, thus repressing lignin biosynthesis. This Zea mays (Maize) protein is MYB transcription factor 69.